Reading from the N-terminus, the 546-residue chain is DDB1- and CUL4-associated factor 11 (546 aa).

Residues 1–19 show a composition bias toward low complexity; that stretch reads MGSRNSSSAGSGSGDPSEG. Residues 1–40 are disordered; the sequence is MGSRNSSSAGSGSGDPSEGLPRRGAGLRRSEEEEEEDEDV. A phosphoserine mark is found at L49 and S75. WD repeat units follow at residues 170–210, 216–258, 263–302, 305–345, 353–392, 435–480, and 481–520; these read SYSQ…RKFK, DVGW…TALD, ERRF…RTLQ, SHED…EDDP, GHQD…SREG, GVLH…KKLT, and NHKA…YFQD. Residues 523-546 form a disordered region; the sequence is PESEECASAPAPVPQSSTPFSSPQ. A compositionally biased stretch (polar residues) spans 536 to 546; the sequence is PQSSTPFSSPQ.

In terms of assembly, interacts with DDB1 and CUL4A.

It functions in the pathway protein modification; protein ubiquitination. Functionally, may function as a substrate receptor for CUL4-DDB1 E3 ubiquitin-protein ligase complex. The sequence is that of DDB1- and CUL4-associated factor 11 (DCAF11) from Homo sapiens (Human).